Here is a 410-residue protein sequence, read N- to C-terminus: Peptidase T (410 aa).

Residue histidine 79 coordinates Zn(2+). Aspartate 81 is a catalytic residue. Aspartate 142 contributes to the Zn(2+) binding site. The Proton acceptor role is filled by glutamate 176. The Zn(2+) site is built by glutamate 177, aspartate 199, and histidine 381.

This sequence belongs to the peptidase M20B family. It depends on Zn(2+) as a cofactor.

The protein resides in the cytoplasm. It carries out the reaction Release of the N-terminal residue from a tripeptide.. Cleaves the N-terminal amino acid of tripeptides. The protein is Peptidase T of Bacillus cereus (strain B4264).